Consider the following 224-residue polypeptide: Cardosin-E (224 aa).

The 221-residue stretch at 1–221 (DSGSAIVALT…DYGNLLVGFA (221 aa)) folds into the Peptidase A1 domain. Residue Asp-35 is part of the active site. Cys-125 and Cys-129 are joined by a disulfide. Asp-134 is an active-site residue.

Belongs to the peptidase A1 family. As to quaternary structure, heterodimer of a light chain and a heavy chain. An intermediate form is produced first, and undergoes proteolytic processing to remove the internal plant-specific insert (PSI) and the propeptide. Post-translationally, N-glycosylated. As to expression, pistils.

It is found in the microsome membrane. It localises to the protein storage vacuole. Its subcellular location is the secreted. The protein resides in the cell wall. The protein localises to the extracellular space. It is found in the extracellular matrix. Inhibited by pepstatin. Aspartic protease with a high preference for bonds between hydrophobic residues. This is Cardosin-E from Cynara cardunculus (Cardoon).